We begin with the raw amino-acid sequence, 520 residues long: RNA-binding protein MEX3A (520 aa).

Positions 49–111 (GLGEPPAPTA…QPPTAPKGAS (63 aa)) are disordered. A compositionally biased stretch (gly residues) spans 60-69 (EDGGGGGGGA). Pro residues predominate over residues 73–91 (PAAPPQPAPPPPPAAPPAA). KH domains lie at 132–193 (TTEC…RREI) and 223–284 (QVTI…REEI). Ser-338 carries the phosphoserine modification. The disordered stretch occupies residues 412 to 461 (SSSSAKARAGPPGAHRSPATSAGPELAGLPRRPPGEPLQGFSKLGGGGLR). At Ser-462 the chain carries Phosphoserine. Residues 469–509 (CMVCFESEVTAALVPCGHNLFCMECAVRICERTDPECPVCH) form an RING-type zinc finger.

Phosphorylated. Highest levels found in fetal brain and testis. Detected also in thymus, salivary gland and uterus.

Its subcellular location is the cytoplasm. The protein resides in the nucleus. The protein localises to the P-body. RNA binding protein, may be involved in post-transcriptional regulatory mechanisms. The sequence is that of RNA-binding protein MEX3A (MEX3A) from Homo sapiens (Human).